The primary structure comprises 369 residues: Histidinol-phosphate aminotransferase (369 aa).

The residue at position 223 (Lys-223) is an N6-(pyridoxal phosphate)lysine.

It belongs to the class-II pyridoxal-phosphate-dependent aminotransferase family. Histidinol-phosphate aminotransferase subfamily. Homodimer. The cofactor is pyridoxal 5'-phosphate.

The enzyme catalyses L-histidinol phosphate + 2-oxoglutarate = 3-(imidazol-4-yl)-2-oxopropyl phosphate + L-glutamate. The protein operates within amino-acid biosynthesis; L-histidine biosynthesis; L-histidine from 5-phospho-alpha-D-ribose 1-diphosphate: step 7/9. Its function is as follows. Catalyzes the conversion of imidazole acetol phosphate to histidinol phosphate. Can also transaminate aromatic amino acids and histidine in addition to histidinol phosphate. The chain is Histidinol-phosphate aminotransferase from Zymomonas mobilis subsp. mobilis (strain ATCC 31821 / ZM4 / CP4).